The chain runs to 359 residues: Guanine nucleotide-binding protein G(o) subunit alpha (359 aa).

The interval 1–26 (MGGCVSATPEEREAKTRSSVIDRQQR) is disordered. The N-myristoyl glycine moiety is linked to residue glycine 2. Cysteine 4 carries the S-palmitoyl cysteine lipid modification. Residues 34 to 359 (NTIKILLLGA…RENLEAANLL (326 aa)) form the G-alpha domain. Residues 37–50 (KILLLGAGESGKST) form a G1 motif region. GTP-binding positions include 42–49 (GAGESGKS), 178–184 (LRSRVQT), 203–207 (DVGGQ), 272–275 (NKAD), and alanine 331. The Mg(2+) site is built by serine 49 and threonine 184. Residues 176–184 (DVLRSRVQT) form a G2 motif region. The G3 motif stretch occupies residues 199 to 208 (YRVVDVGGQR). Positions 268-275 (ILFLNKAD) are G4 motif. The segment at 329–334 (TTATDT) is G5 motif.

It belongs to the G-alpha family. G(i/o/t/z) subfamily. G proteins are composed of 3 units; alpha, beta and gamma. The alpha chain contains the guanine nucleotide binding site.

Functionally, guanine nucleotide-binding proteins (G proteins) are involved as modulators or transducers in various transmembrane signaling systems. The G(o) protein function is not clear. This chain is Guanine nucleotide-binding protein G(o) subunit alpha, found in Geodia cydonium (Sponge).